Reading from the N-terminus, the 278-residue chain is Thiazole synthase (278 aa).

The active-site Schiff-base intermediate with DXP is the K107. 1-deoxy-D-xylulose 5-phosphate contacts are provided by residues G168, 194 to 195 (AG), and 216 to 217 (AS).

The protein belongs to the ThiG family. As to quaternary structure, homotetramer. Forms heterodimers with either ThiH or ThiS.

Its subcellular location is the cytoplasm. The catalysed reaction is [ThiS sulfur-carrier protein]-C-terminal-Gly-aminoethanethioate + 2-iminoacetate + 1-deoxy-D-xylulose 5-phosphate = [ThiS sulfur-carrier protein]-C-terminal Gly-Gly + 2-[(2R,5Z)-2-carboxy-4-methylthiazol-5(2H)-ylidene]ethyl phosphate + 2 H2O + H(+). It functions in the pathway cofactor biosynthesis; thiamine diphosphate biosynthesis. Functionally, catalyzes the rearrangement of 1-deoxy-D-xylulose 5-phosphate (DXP) to produce the thiazole phosphate moiety of thiamine. Sulfur is provided by the thiocarboxylate moiety of the carrier protein ThiS. In vitro, sulfur can be provided by H(2)S. This chain is Thiazole synthase, found in Corynebacterium urealyticum (strain ATCC 43042 / DSM 7109).